A 273-amino-acid polypeptide reads, in one-letter code: UPF0173 metal-dependent hydrolase Bpro_4324 (273 aa).

Belongs to the UPF0173 family.

The chain is UPF0173 metal-dependent hydrolase Bpro_4324 from Polaromonas sp. (strain JS666 / ATCC BAA-500).